The following is a 211-amino-acid chain: Histone H1t (211 aa).

Alanine 1 carries the post-translational modification N-acetylalanine. Positions 1–16 are enriched in low complexity; the sequence is AETAPAAPADSVPASV. The segment at 1 to 42 is disordered; sequence AETAPAAPADSVPASVEKPPAKKRGKKPVGLTGTSRKAPSAS. Residues 32–42 are compositionally biased toward polar residues; it reads TGTSRKAPSAS. An H15 domain is found at 39 to 112; it reads PSASVSKLIT…GASGSFKLSK (74 aa). At arginine 57 the chain carries Citrulline. Residues 101–211 are disordered; sequence GTGASGSFKL…TNPRKATNRK (111 aa). Residues 121-135 are compositionally biased toward basic residues; it reads GKVKKPAAAKTKKLV. Serine 142 carries the phosphoserine modification. The segment covering 147–156 has biased composition (basic residues); sequence KANKRAKKSR. Threonine 158 carries the post-translational modification Phosphothreonine. A phosphoserine mark is found at serine 166 and serine 181. The span at 176 to 189 shows a compositional bias: basic residues; that stretch reads KQQRKSPAKARAAK.

This sequence belongs to the histone H1/H5 family. In terms of processing, phosphorylated in early spermatids. Citrullination at Arg-57 (H1R54ci) by PADI4 takes place within the DNA-binding site of H1 and results in its displacement from chromatin and global chromatin decondensation, thereby promoting pluripotency and stem cell maintenance. Testis-specific.

It is found in the nucleus. The protein resides in the chromosome. Its function is as follows. Testis-specific histone H1 that forms less compacted chromatin compared to other H1 histone subtypes. Formation of more relaxed chromatin may be required to promote chromatin architecture required for proper chromosome regulation during meiosis, such as homologous recombination. Histones H1 act as linkers that bind to nucleosomes and compact polynucleosomes into a higher-order chromatin configuration. In Sus scrofa (Pig), this protein is Histone H1t.